Here is a 304-residue protein sequence, read N- to C-terminus: Voltage-dependent anion channel-forming protein YneE (304 aa).

4 helical membrane-spanning segments follow: residues 28-48 (LLLN…YTHL), 50-70 (IKFT…FLGF), 194-214 (VLAG…TLIL), and 220-240 (LFCI…TPFI).

It belongs to the anion channel-forming bestrophin (TC 1.A.46) family.

The protein localises to the cell membrane. The chain is Voltage-dependent anion channel-forming protein YneE (yneE) from Escherichia coli O157:H7.